An 85-amino-acid polypeptide reads, in one-letter code: uncharacterized protein (85 aa).

Belongs to the ycf76 family.

It localises to the plastid. Its subcellular location is the chloroplast. This is an uncharacterized protein from Saccharum hybrid (Sugarcane).